The sequence spans 334 residues: Nucleoid-associated protein PMI0825 (334 aa).

The protein belongs to the YejK family.

It localises to the cytoplasm. The protein localises to the nucleoid. The sequence is that of Nucleoid-associated protein PMI0825 from Proteus mirabilis (strain HI4320).